We begin with the raw amino-acid sequence, 249 residues long: Cell division protein DivIB (249 aa).

The Cytoplasmic portion of the chain corresponds to 1-19; sequence MKEENEYIVKRRKKRRRKR. Residues 20–40 form a helical membrane-spanning segment; that stretch reads ITIFLFLLICILVTLCLKLPY. The 69-residue stretch at 41-109 folds into the POTRA domain; it reads FNIKYINVEG…NTIDIIVKER (69 aa). The Extracellular segment spans residues 41-249; that stretch reads FNIKYINVEG…KGNPVYSLQQ (209 aa).

This sequence belongs to the FtsQ/DivIB family. DivIB subfamily.

Its subcellular location is the cell membrane. Cell division protein that may be involved in stabilizing or promoting the assembly of the division complex. In Clostridium acetobutylicum (strain ATCC 824 / DSM 792 / JCM 1419 / IAM 19013 / LMG 5710 / NBRC 13948 / NRRL B-527 / VKM B-1787 / 2291 / W), this protein is Cell division protein DivIB.